We begin with the raw amino-acid sequence, 479 residues long: Ribosomal RNA small subunit methyltransferase F (479 aa).

Residues 125–131 (AAAPGSK), E149, D176, and D194 contribute to the S-adenosyl-L-methionine site. Residue C247 is the Nucleophile of the active site.

This sequence belongs to the class I-like SAM-binding methyltransferase superfamily. RsmB/NOP family.

The protein localises to the cytoplasm. It carries out the reaction cytidine(1407) in 16S rRNA + S-adenosyl-L-methionine = 5-methylcytidine(1407) in 16S rRNA + S-adenosyl-L-homocysteine + H(+). Its function is as follows. Specifically methylates the cytosine at position 1407 (m5C1407) of 16S rRNA. This Salmonella paratyphi C (strain RKS4594) protein is Ribosomal RNA small subunit methyltransferase F.